A 531-amino-acid chain; its full sequence is 2-isopropylmalate synthase (531 aa).

The region spanning 8–284 is the Pyruvate carboxyltransferase domain; it reads IIIFDTTLRD…LTNIDTKQIY (277 aa). Aspartate 17, histidine 208, histidine 210, and asparagine 244 together coordinate Mn(2+). The regulatory domain stretch occupies residues 408-531; sequence RVELVQVSCG…TQDKQTEVTA (124 aa).

Belongs to the alpha-IPM synthase/homocitrate synthase family. LeuA type 1 subfamily. As to quaternary structure, homodimer. The cofactor is Mn(2+).

It is found in the cytoplasm. The catalysed reaction is 3-methyl-2-oxobutanoate + acetyl-CoA + H2O = (2S)-2-isopropylmalate + CoA + H(+). It functions in the pathway amino-acid biosynthesis; L-leucine biosynthesis; L-leucine from 3-methyl-2-oxobutanoate: step 1/4. Its function is as follows. Catalyzes the condensation of the acetyl group of acetyl-CoA with 3-methyl-2-oxobutanoate (2-ketoisovalerate) to form 3-carboxy-3-hydroxy-4-methylpentanoate (2-isopropylmalate). This chain is 2-isopropylmalate synthase, found in Trichormus variabilis (strain ATCC 29413 / PCC 7937) (Anabaena variabilis).